The sequence spans 284 residues: MMEQKIVQIGDIPVANDKPFTLFAGMNVLESRDLAMQICEHYVKVTDKLGIPYVFKASFDKANRSSVHSYRGPGLEEGMKIFQELKDTFGVKIITDVHTEAQAQPVADVVDVIQLPAFLARQTDLVEAMAKTGAVINVKKPQFMSPGQVGNIVEKFAECGNDKIILCERGSCHGYDNLVVDMLGFGVMKKASKGSPIIFDVTHSLQMRDPSGAASGGRREQTVELAKAGLATGIAGLFIEAHPNPDQARCDGPSALPLDKLEPFLAQMKALDDLVKSFASIDIR.

It belongs to the KdsA family.

Its subcellular location is the cytoplasm. The enzyme catalyses D-arabinose 5-phosphate + phosphoenolpyruvate + H2O = 3-deoxy-alpha-D-manno-2-octulosonate-8-phosphate + phosphate. Its pathway is carbohydrate biosynthesis; 3-deoxy-D-manno-octulosonate biosynthesis; 3-deoxy-D-manno-octulosonate from D-ribulose 5-phosphate: step 2/3. It participates in bacterial outer membrane biogenesis; lipopolysaccharide biosynthesis. The sequence is that of 2-dehydro-3-deoxyphosphooctonate aldolase from Vibrio vulnificus (strain CMCP6).